A 358-amino-acid chain; its full sequence is Zinc-type alcohol dehydrogenase-like protein YogA (358 aa).

It belongs to the zinc-containing alcohol dehydrogenase family. Quinone oxidoreductase subfamily.

It participates in secondary metabolite biosynthesis. Its function is as follows. Zinc-type alcohol dehydrogenase-like protein; part of the gene cluster that mediates the biosynthesis of phomenoic acid, a long chain aliphatic carboxylic acid that does not appear to be essential for pathogenicity but may play a role in allowing to outcompete other fungi in the environmental niche via its antifungal properties. The polyketide synthase produces the long methylated aliphatic carboxylic acid chain of phomenoic acid. The cluster-specific cytochrome P450 monooxygenase may then hydroxylate the methyl group of carbon 31. The putative dehydrogenase YogA, which has no obvious role in phomenoic acid biosynthesis, may further modify phomenoic acid to produce a compound not identified yet. In Leptosphaeria maculans (strain JN3 / isolate v23.1.3 / race Av1-4-5-6-7-8) (Blackleg fungus), this protein is Zinc-type alcohol dehydrogenase-like protein YogA.